The primary structure comprises 329 residues: Ribosomal protein L11 methyltransferase (329 aa).

4 residues coordinate S-adenosyl-L-methionine: threonine 177, glycine 198, aspartate 220, and asparagine 264.

It belongs to the methyltransferase superfamily. PrmA family.

Its subcellular location is the cytoplasm. It carries out the reaction L-lysyl-[protein] + 3 S-adenosyl-L-methionine = N(6),N(6),N(6)-trimethyl-L-lysyl-[protein] + 3 S-adenosyl-L-homocysteine + 3 H(+). Methylates ribosomal protein L11. The chain is Ribosomal protein L11 methyltransferase from Helicobacter acinonychis (strain Sheeba).